A 476-amino-acid chain; its full sequence is Serine protease HTRA4 (476 aa).

The first 31 residues, 1-31 (MIRPQLRTAGLGRCLLPGLLLLLVPVLWAGA), serve as a signal peptide directing secretion. The 74-residue stretch at 36-109 (TQPSCPAVCQ…PGFPSTCGCP (74 aa)) folds into the IGFBP N-terminal domain. Cystine bridges form between cysteine 40–cysteine 66, cysteine 44–cysteine 68, cysteine 49–cysteine 69, cysteine 55–cysteine 72, cysteine 80–cysteine 94, cysteine 88–cysteine 106, cysteine 108–cysteine 127, and cysteine 116–cysteine 152. One can recognise a Kazal-like domain in the interval 88–154 (CAPGLQCLQP…VPVQWGNCGD (67 aa)). A serine protease region spans residues 202–362 (GSGFIVSEDG…IPSDRVRQFL (161 aa)). Catalysis depends on charge relay system residues histidine 218, aspartate 248, and serine 326. Residues 383–474 (LQMLSLTVPL…NLLLTVIPET (92 aa)) enclose the PDZ domain.

This sequence belongs to the peptidase S1C family.

The protein localises to the secreted. Functionally, serine protease. This chain is Serine protease HTRA4 (HTRA4), found in Homo sapiens (Human).